The primary structure comprises 183 residues: MPLSVEQALANFSQRYVEAWKAQHDCLPINEELVGLASPCIEETRDLEISWQPIVRDEAIRLHNIEQGIELDLHDDFHAFYGTQYSADMTAKFEDMNIELLQVWSDEDLERLQGNMLGHLVMQRRLKLVPTLFVAVTDDEMEVVSICNQSGEVILDRVGTKNRTVLAANMAEFLNKLEPVIAA.

Belongs to the Syd family.

It is found in the cell inner membrane. Functionally, interacts with the SecY protein in vivo. May bind preferentially to an uncomplexed state of SecY, thus functioning either as a chelating agent for excess SecY in the cell or as a regulatory factor that negatively controls the translocase function. This is Protein Syd from Aliivibrio fischeri (strain ATCC 700601 / ES114) (Vibrio fischeri).